The following is a 417-amino-acid chain: uncharacterized protein (417 aa).

Residues 10-30 (ALVCFSILSILVLACGCVNTP) form a helical membrane-spanning segment. A disordered region spans residues 84–106 (QENHPLQSNQNYEQTNGNFNEEN). Positions 86 to 106 (NHPLQSNQNYEQTNGNFNEEN) are enriched in polar residues. A helical membrane pass occupies residues 148 to 168 (LYYIKVIDPIVGGLAGIDIYV).

The protein localises to the cell membrane. This is an uncharacterized protein from Methanocaldococcus jannaschii (strain ATCC 43067 / DSM 2661 / JAL-1 / JCM 10045 / NBRC 100440) (Methanococcus jannaschii).